The sequence spans 264 residues: Thymidylate synthase (264 aa).

Arginine 21 serves as a coordination point for dUMP. Histidine 51 contributes to the (6R)-5,10-methylene-5,6,7,8-tetrahydrofolate binding site. 126 to 127 lines the dUMP pocket; it reads RR. The active-site Nucleophile is cysteine 146. DUMP is bound by residues 166-169, asparagine 177, and 207-209; these read RSAD and HLY. Residue aspartate 169 participates in (6R)-5,10-methylene-5,6,7,8-tetrahydrofolate binding. Alanine 263 is a (6R)-5,10-methylene-5,6,7,8-tetrahydrofolate binding site.

The protein belongs to the thymidylate synthase family. Bacterial-type ThyA subfamily. Homodimer.

The protein resides in the cytoplasm. The enzyme catalyses dUMP + (6R)-5,10-methylene-5,6,7,8-tetrahydrofolate = 7,8-dihydrofolate + dTMP. It participates in pyrimidine metabolism; dTTP biosynthesis. Functionally, catalyzes the reductive methylation of 2'-deoxyuridine-5'-monophosphate (dUMP) to 2'-deoxythymidine-5'-monophosphate (dTMP) while utilizing 5,10-methylenetetrahydrofolate (mTHF) as the methyl donor and reductant in the reaction, yielding dihydrofolate (DHF) as a by-product. This enzymatic reaction provides an intracellular de novo source of dTMP, an essential precursor for DNA biosynthesis. The protein is Thymidylate synthase of Ralstonia nicotianae (strain ATCC BAA-1114 / GMI1000) (Ralstonia solanacearum).